The chain runs to 63 residues: Large ribosomal subunit protein uL29 (63 aa).

It belongs to the universal ribosomal protein uL29 family.

The sequence is that of Large ribosomal subunit protein uL29 from Sulfurovum sp. (strain NBC37-1).